Consider the following 115-residue polypeptide: uncharacterized protein (115 aa).

This is an uncharacterized protein from Aquifex aeolicus (strain VF5).